Consider the following 460-residue polypeptide: Bifunctional protein GlmU (460 aa).

Residues 1-232 form a pyrophosphorylase region; that stretch reads MALNVVILAA…AIEVEGANNR (232 aa). Residues 8–11, K22, Q73, 78–79, 100–102, G137, E157, N172, and N230 each bind UDP-N-acetyl-alpha-D-glucosamine; these read LAAG, GT, and YGD. D102 contacts Mg(2+). N230 serves as a coordination point for Mg(2+). Residues 233–253 are linker; the sequence is VQLAQLERAYQAREAEKLMLA. The tract at residues 254-460 is N-acetyltransferase; sequence GANLRDPSRI…GWQRPVKIKK (207 aa). UDP-N-acetyl-alpha-D-glucosamine is bound by residues R336 and K354. Residue H366 is the Proton acceptor of the active site. UDP-N-acetyl-alpha-D-glucosamine-binding residues include Y369 and N380. Residues A383, 389–390, S408, A426, and R443 contribute to the acetyl-CoA site; that span reads NY.

The protein in the N-terminal section; belongs to the N-acetylglucosamine-1-phosphate uridyltransferase family. This sequence in the C-terminal section; belongs to the transferase hexapeptide repeat family. As to quaternary structure, homotrimer. The cofactor is Mg(2+).

Its subcellular location is the cytoplasm. It catalyses the reaction alpha-D-glucosamine 1-phosphate + acetyl-CoA = N-acetyl-alpha-D-glucosamine 1-phosphate + CoA + H(+). It carries out the reaction N-acetyl-alpha-D-glucosamine 1-phosphate + UTP + H(+) = UDP-N-acetyl-alpha-D-glucosamine + diphosphate. Its pathway is nucleotide-sugar biosynthesis; UDP-N-acetyl-alpha-D-glucosamine biosynthesis; N-acetyl-alpha-D-glucosamine 1-phosphate from alpha-D-glucosamine 6-phosphate (route II): step 2/2. It participates in nucleotide-sugar biosynthesis; UDP-N-acetyl-alpha-D-glucosamine biosynthesis; UDP-N-acetyl-alpha-D-glucosamine from N-acetyl-alpha-D-glucosamine 1-phosphate: step 1/1. The protein operates within bacterial outer membrane biogenesis; LPS lipid A biosynthesis. Catalyzes the last two sequential reactions in the de novo biosynthetic pathway for UDP-N-acetylglucosamine (UDP-GlcNAc). The C-terminal domain catalyzes the transfer of acetyl group from acetyl coenzyme A to glucosamine-1-phosphate (GlcN-1-P) to produce N-acetylglucosamine-1-phosphate (GlcNAc-1-P), which is converted into UDP-GlcNAc by the transfer of uridine 5-monophosphate (from uridine 5-triphosphate), a reaction catalyzed by the N-terminal domain. This is Bifunctional protein GlmU from Shewanella baltica (strain OS185).